The sequence spans 358 residues: Envelope glycoprotein K (358 aa).

Positions 1 to 33 (MSRVQCLRLAAVIASISHLIFLVWFVCWNSVLE) are cleaved as a signal peptide. Over 34-141 (NNEDCVYATR…LEMADCMAYL (108 aa)) the chain is Extracellular. 2 N-linked (GlcNAc...) asparagine; by host glycosylation sites follow: asparagine 57 and asparagine 80. A helical transmembrane segment spans residues 142–162 (WFFQVRTATAALLMYLAFLCV). The Cytoplasmic segment spans residues 163-235 (NRQRRGFGPW…DTLGFYLMHP (73 aa)). The chain crosses the membrane as a helical span at residues 236-256 (LALLLRAIETILYFASLVASA). The Extracellular segment spans residues 257 to 273 (TVLRVNFDPCSVVLPNH). A helical membrane pass occupies residues 274–294 (VKVFAWVFVAALGALEVVSAI). The Cytoplasmic portion of the chain corresponds to 295–323 (DHLRRETRSARDAAAVIRPTNIIAACCAN). Residues 324–344 (IISHVLLRMLYGAALVLVVIG) traverse the membrane as a helical segment. The Extracellular portion of the chain corresponds to 345–358 (ALKYEREIQTRLLG).

It belongs to the alphaherpesvirinae glycoprotein K family. As to quaternary structure, interacts (via UL20 interaction region) with protein UL20 (via N-terminus); this interaction probably plays a role in the coordinate transport of protein UL20 and gK to the trans-Golgi network (TGN), and is required for the cell surface expression of gK.

It localises to the host cell membrane. It is found in the host endosome membrane. The protein localises to the host Golgi apparatus membrane. Glycoprotein that probably modulates membrane fusion events during secondary envelopment of cytoplasmic capsids that bud into specific trans-Golgi network (TGN)-derived membranes. Also plays a role, together with gB, in virus-induced cell-to-cell fusion (syncytia formation). Seems to block fusion of virions with infected-cell membranes. This Psittacid herpesvirus 1 (isolate Amazon parrot/-/97-0001/1997) (PsHV-1) protein is Envelope glycoprotein K (gK).